Reading from the N-terminus, the 1450-residue chain is Auxilin-like protein 1 (1450 aa).

Disordered regions lie at residues 117-142 (NEDK…GKKS), 241-318 (STRD…AESS), 357-383 (DSKI…SQIL), 459-480 (NSKQ…TKQE), 512-541 (SQKD…SQEM), 556-575 (EETP…EKSE), 908-946 (DRSE…RSSF), 961-1046 (EQHR…ELEH), 1077-1168 (GAAT…ERKQ), 1192-1241 (AGKT…AERA), and 1254-1328 (AMEK…SDRA). A coiled-coil region spans residues 316 to 344 (ESSAALKKAIEEAQIRMNIAKQMMEKKKS). Residues 357–366 (DSKIENKGNT) show a composition bias toward basic and acidic residues. 7 stretches are compositionally biased toward basic and acidic residues: residues 512–524 (SQKD…EKEN), 564–575 (SKSEMNIEEKSE), 908–923 (DRSE…RFDQ), 1037–1046 (RNGDKKELEH), 1117–1131 (NMKE…RSSM), 1147–1168 (ETVE…ERKQ), and 1192–1226 (AGKT…KLSS). Coiled-coil stretches lie at residues 1142-1184 (SQNK…RERA) and 1219-1257 (EVND…AMEK). Residues 1270-1299 (SYGGSKSFSSSGERRGSSSSGTENKSSGPS) show a composition bias toward low complexity. Residues 1310–1328 (PIQRCKARSERHQRTSDRA) are compositionally biased toward basic and acidic residues. The stretch at 1327-1355 (RAAEALAEKKLRDLKTQKEQTERNRLAEA) forms a coiled coil. One can recognise a J domain in the interval 1377-1450 (TLQYILGAES…AWNKFGADER (74 aa)).

This is Auxilin-like protein 1 (AUL1) from Arabidopsis thaliana (Mouse-ear cress).